A 248-amino-acid chain; its full sequence is tRNA pseudouridine synthase A 2 (248 aa).

D55 serves as the catalytic Nucleophile. A substrate-binding site is contributed by Y113.

Belongs to the tRNA pseudouridine synthase TruA family. As to quaternary structure, homodimer.

The enzyme catalyses uridine(38/39/40) in tRNA = pseudouridine(38/39/40) in tRNA. Formation of pseudouridine at positions 38, 39 and 40 in the anticodon stem and loop of transfer RNAs. The protein is tRNA pseudouridine synthase A 2 of Clostridium tetani (strain Massachusetts / E88).